Consider the following 152-residue polypeptide: Nucleoside diphosphate kinase (152 aa).

Positions 9, 57, 85, 91, 102, and 112 each coordinate ATP. Histidine 115 (pros-phosphohistidine intermediate) is an active-site residue.

It belongs to the NDK family. As to quaternary structure, homotetramer. Mg(2+) is required as a cofactor.

Its subcellular location is the cytoplasm. The catalysed reaction is a 2'-deoxyribonucleoside 5'-diphosphate + ATP = a 2'-deoxyribonucleoside 5'-triphosphate + ADP. It carries out the reaction a ribonucleoside 5'-diphosphate + ATP = a ribonucleoside 5'-triphosphate + ADP. Major role in the synthesis of nucleoside triphosphates other than ATP. The ATP gamma phosphate is transferred to the NDP beta phosphate via a ping-pong mechanism, using a phosphorylated active-site intermediate. This is Nucleoside diphosphate kinase from Rhodopirellula baltica (strain DSM 10527 / NCIMB 13988 / SH1).